Here is a 273-residue protein sequence, read N- to C-terminus: Terpene cyclase ascF (273 aa).

7 helical membrane-spanning segments follow: residues 18 to 38, 49 to 69, 78 to 98, 113 to 133, 153 to 173, 178 to 198, and 217 to 237; these read VYEA…ILIA, MPLF…LWVV, MTIW…HGVL, ILVG…SWWI, YWAV…MLCV, GGVS…GLNM, and APAV…GFVL.

Belongs to the paxB family.

Its subcellular location is the membrane. The catalysed reaction is ilicicolin A epoxide = ilicicolin C. It functions in the pathway secondary metabolite biosynthesis; terpenoid biosynthesis. Functionally, terpene cyclase; part of the asc-1 gene cluster that mediates the biosynthesis of both ascochlorin and ascofuranone, a strong inhibitor of cyanide-insensitive alternative oxidases and a promising drug candidate against African trypanosomiasis. The first step in the pathway is performed by the non-reducing polyketide synthase ascC that produces orsellinic acid by condensing acetyl-CoA with 3 malonyl-CoA units. Orsellinic acid is then prenylated by the prenyltransferase ascA to yield ilicicolinic acid B. Ilicicolinic acid B is further reduced to ilicicolin B by the reductase ascB. The halogenase ascD then chlorinates ilicicolin B to produce ilicicolin A which is converted to ilicicolin A epoxide by the cytochrome P450 monooxygenase ascE that catalyzes stereoselective epoxidation of the terminal double bond of the prenyl group. Ilicicolin A epoxide is the last common precursor for the biosynthesis of ascofuranone and ascochlorin. The terpene cyclase ascF produces a monocyclic terpene, and the cyclization reaction is proposed to be initiated by protonation of the terminal epoxide of ilicicolin A epoxide to generate a monocyclic tertiarycation, which is followed by a series of hydride and methyl shifts with abstraction of proton, leading to the formation of the (14S,15R,19R)-trimethylcyclohexanone ring structure of ilicicolin C, which is finally reduced to ascochlorin by the dehydrogenase ascG. On the other hand, ilicicolin A epoxide is hydroxylated by the cytochrome P450 monooxygenase ascH, and the resultant product is cyclized by the terpene cyclase ascI to ascofuranol via protonation-initiated epoxide ring opening, which facilitates the 6-endo-tet cyclization to form the tetrahy-drofuran ring. Finally, ascofuranol is oxidized into ascofuranone by ascJ. This is Terpene cyclase ascF from Acremonium egyptiacum (Oospora egyptiaca).